A 428-amino-acid chain; its full sequence is Histidinol dehydrogenase (428 aa).

3 residues coordinate NAD(+): Tyr-127, Gln-185, and Asn-208. Residues Ser-232, Gln-254, and His-257 each coordinate substrate. Positions 254 and 257 each coordinate Zn(2+). Active-site proton acceptor residues include Glu-321 and His-322. The substrate site is built by His-322, Asp-355, Glu-409, and His-414. Asp-355 contributes to the Zn(2+) binding site. His-414 lines the Zn(2+) pocket.

It belongs to the histidinol dehydrogenase family. Zn(2+) is required as a cofactor.

It carries out the reaction L-histidinol + 2 NAD(+) + H2O = L-histidine + 2 NADH + 3 H(+). It participates in amino-acid biosynthesis; L-histidine biosynthesis; L-histidine from 5-phospho-alpha-D-ribose 1-diphosphate: step 9/9. Catalyzes the sequential NAD-dependent oxidations of L-histidinol to L-histidinaldehyde and then to L-histidine. The protein is Histidinol dehydrogenase of Pasteurella multocida (strain Pm70).